The primary structure comprises 121 residues: Protein TCL1B5 (121 aa).

Belongs to the TCL1 family.

The protein is Protein TCL1B5 (Tcl1b5) of Mus musculus (Mouse).